The following is a 201-amino-acid chain: dITP/XTP pyrophosphatase (201 aa).

Ser7–Lys12 is a binding site for substrate. The active-site Proton acceptor is the Asp72. Asp72 is a Mg(2+) binding site. Residues Ser73, Phe154–Asp157, Lys177, and His182–Arg183 contribute to the substrate site.

The protein belongs to the HAM1 NTPase family. Homodimer. The cofactor is Mg(2+).

It catalyses the reaction XTP + H2O = XMP + diphosphate + H(+). It carries out the reaction dITP + H2O = dIMP + diphosphate + H(+). The catalysed reaction is ITP + H2O = IMP + diphosphate + H(+). Pyrophosphatase that catalyzes the hydrolysis of nucleoside triphosphates to their monophosphate derivatives, with a high preference for the non-canonical purine nucleotides XTP (xanthosine triphosphate), dITP (deoxyinosine triphosphate) and ITP. Seems to function as a house-cleaning enzyme that removes non-canonical purine nucleotides from the nucleotide pool, thus preventing their incorporation into DNA/RNA and avoiding chromosomal lesions. The protein is dITP/XTP pyrophosphatase of Leuconostoc mesenteroides subsp. mesenteroides (strain ATCC 8293 / DSM 20343 / BCRC 11652 / CCM 1803 / JCM 6124 / NCDO 523 / NBRC 100496 / NCIMB 8023 / NCTC 12954 / NRRL B-1118 / 37Y).